Here is a 523-residue protein sequence, read N- to C-terminus: Frizzled-2 (523 aa).

The FZ domain occupies 1-120; the sequence is PDHGFCQPIS…HGAEQICVGQ (120 aa). Residues 1-205 are Extracellular-facing; it reads PDHGFCQPIS…EDEIRFARVW (205 aa). Cystine bridges form between cysteine 6/cysteine 67, cysteine 14/cysteine 60, cysteine 51/cysteine 88, cysteine 77/cysteine 117, and cysteine 81/cysteine 105. N-linked (GlcNAc...) asparagine glycosylation is present at asparagine 20. Asparagine 121 carries N-linked (GlcNAc...) asparagine glycosylation. The helical transmembrane segment at 206 to 226 threads the bilayer; sequence ILVWSVLCCASTFFTVTTYLV. Residues 227 to 237 are Cytoplasmic-facing; it reads DMQRFRYPERP. A helical transmembrane segment spans residues 238–258; the sequence is IIFLSGCYTMVSVAYIAGFVL. The Extracellular segment spans residues 259–285; it reads EERVVCNERFQEDGYRTVVQGTKKEGC. A helical membrane pass occupies residues 286 to 306; the sequence is TILFMMLYFFSMASSIWWVIL. Topologically, residues 307–328 are cytoplasmic; it reads SLTWFLAAGMKWGHEAIEANSQ. The chain crosses the membrane as a helical span at residues 329–349; sequence YFHLAAWAVPAVKTITILAMG. At 350-372 the chain is on the extracellular side; sequence QIDGDLLSGVCFVGLNGIDPLRG. A helical membrane pass occupies residues 373–393; the sequence is FVLAPLFVYLFIGTSFLLAGF. Over 394–419 the chain is Cytoplasmic; the sequence is VSLFRIRTIMKHGGTKTEKLERLMVR. Residues 420–440 form a helical membrane-spanning segment; sequence IGVFSVLYTVPATIVIACYFY. Residues 441–477 are Extracellular-facing; the sequence is EQAFRQHWERSWISQHCKSLAIPCPLHFTPRMTPDFT. Residues 478-498 form a helical membrane-spanning segment; sequence VYMIKYLMTLIVGITSGFWIF. At 499–523 the chain is on the cytoplasmic side; the sequence is SGKTLHSWRKFYTRLTNSRQGETTV. Residues 501-506 carry the Lys-Thr-X-X-X-Trp motif, mediates interaction with the PDZ domain of Dvl family members motif; the sequence is KTLHSW. Residues 521–523 carry the PDZ-binding motif; that stretch reads TTV.

The protein belongs to the G-protein coupled receptor Fz/Smo family. In terms of tissue distribution, expressed in the developing head and limbs. Expressed broadly in cranial ectoderm. Also expressed in the developing somites (dermomyotome) and in other cranial placodes, including the olfactory, lens, and otic placodes (rostral rim of the vesicle).

It localises to the membrane. Its subcellular location is the cell membrane. Functionally, receptor for Wnt proteins. Most of frizzled receptors are coupled to the beta-catenin canonical signaling pathway, which leads to the activation of disheveled proteins, inhibition of GSK-3 kinase, nuclear accumulation of beta-catenin and activation of Wnt target genes. A second signaling pathway involving PKC and calcium fluxes has been seen for some family members, but it is not yet clear if it represents a distinct pathway or if it can be integrated in the canonical pathway, as PKC seems to be required for Wnt-mediated inactivation of GSK-3 kinase. Both pathways seem to involve interactions with G-proteins. May be involved in transduction and intercellular transmission of polarity information during tissue morphogenesis and/or in differentiated tissues. This is Frizzled-2 (FZD2) from Gallus gallus (Chicken).